The chain runs to 1304 residues: DNA-directed RNA polymerase subunit beta' (1304 aa).

A disordered region spans residues 1 to 23; that stretch reads MSEKGRFSAGLSRQAADGNKADA. Positions 241, 315, 322, and 325 each coordinate Zn(2+). Residues 1256–1268 are compositionally biased toward acidic residues; it reads AAEPEPDEEEEEP. A disordered region spans residues 1256 to 1304; the sequence is AAEPEPDEEEEEPAVLPELPPRLILEDDQLIDDSTPAFDELEEDDDEEE. The segment covering 1269–1278 has biased composition (low complexity); that stretch reads AVLPELPPRL. Over residues 1294–1304 the composition is skewed to acidic residues; it reads DELEEDDDEEE.

This sequence belongs to the RNA polymerase beta' chain family. RpoC2 subfamily. As to quaternary structure, in cyanobacteria the RNAP catalytic core is composed of 2 alpha, 1 beta, 1 beta', 1 gamma and 1 omega subunit. When a sigma factor is associated with the core the holoenzyme is formed, which can initiate transcription. It depends on Zn(2+) as a cofactor.

It carries out the reaction RNA(n) + a ribonucleoside 5'-triphosphate = RNA(n+1) + diphosphate. Its function is as follows. DNA-dependent RNA polymerase catalyzes the transcription of DNA into RNA using the four ribonucleoside triphosphates as substrates. The polypeptide is DNA-directed RNA polymerase subunit beta' (Synechococcus sp. (strain JA-2-3B'a(2-13)) (Cyanobacteria bacterium Yellowstone B-Prime)).